The following is a 284-amino-acid chain: NAD kinase (284 aa).

The active-site Proton acceptor is D70. Residues 70–71 (DG), 139–140 (NE), K167, D169, L177, 180–185 (TAYNLS), and Q236 contribute to the NAD(+) site.

The protein belongs to the NAD kinase family. A divalent metal cation serves as cofactor.

It localises to the cytoplasm. The catalysed reaction is NAD(+) + ATP = ADP + NADP(+) + H(+). Involved in the regulation of the intracellular balance of NAD and NADP, and is a key enzyme in the biosynthesis of NADP. Catalyzes specifically the phosphorylation on 2'-hydroxyl of the adenosine moiety of NAD to yield NADP. The protein is NAD kinase of Helicobacter pylori (strain G27).